The primary structure comprises 84 residues: Sulfur carrier protein TusA (84 aa).

The active-site Cysteine persulfide intermediate is the Cys19.

It belongs to the sulfur carrier protein TusA family. As to quaternary structure, interacts with IscS.

The protein resides in the cytoplasm. Its pathway is tRNA modification. Sulfur carrier protein involved in sulfur trafficking in the cell. Part of a sulfur-relay system required for 2-thiolation during synthesis of 2-thiouridine of the modified wobble base 5-methylaminomethyl-2-thiouridine (mnm(5)s(2)U) in tRNA. Interacts with IscS and stimulates its cysteine desulfurase activity. Accepts an activated sulfur from IscS, which is then transferred to TusD, and thus determines the direction of sulfur flow from IscS to 2-thiouridine formation. Also appears to be involved in sulfur transfer for the biosynthesis of molybdopterin. The chain is Sulfur carrier protein TusA from Photorhabdus laumondii subsp. laumondii (strain DSM 15139 / CIP 105565 / TT01) (Photorhabdus luminescens subsp. laumondii).